We begin with the raw amino-acid sequence, 265 residues long: Mlc titration factor A (265 aa).

Zn(2+) is bound by residues histidine 111, histidine 148, histidine 152, and glutamate 211.

It belongs to the MtfA family. As to quaternary structure, interacts with Mlc. Requires Zn(2+) as cofactor.

It is found in the cytoplasm. Involved in the modulation of the activity of the glucose-phosphotransferase system (glucose-PTS). Interacts with the transcriptional repressor Mlc, preventing its interaction with DNA and leading to the modulation of expression of genes regulated by Mlc, including ptsG, which encodes the PTS system glucose-specific EIICB component. Its function is as follows. Shows zinc-dependent metallopeptidase activity. The protein is Mlc titration factor A of Salmonella paratyphi A (strain AKU_12601).